The primary structure comprises 211 residues: Probable GTP-binding protein EngB (211 aa).

In terms of domain architecture, EngB-type G spans 13-188; it reads SGYEIAFAGR…ASVMAGRLHF (176 aa). Residues 21-28, 48-52, 67-70, 134-137, and 167-169 each bind GTP; these read GRSNAGKS, GRTQM, DLPG, TKAD, and FSS. Mg(2+) is bound by residues Ser-28 and Thr-50.

It belongs to the TRAFAC class TrmE-Era-EngA-EngB-Septin-like GTPase superfamily. EngB GTPase family. Requires Mg(2+) as cofactor.

In terms of biological role, necessary for normal cell division and for the maintenance of normal septation. The polypeptide is Probable GTP-binding protein EngB (Acinetobacter baumannii (strain ATCC 17978 / DSM 105126 / CIP 53.77 / LMG 1025 / NCDC KC755 / 5377)).